Reading from the N-terminus, the 155-residue chain is NADH-ubiquinone oxidoreductase chain 6 (155 aa).

The next 4 membrane-spanning stretches (helical) occupy residues 24–44 (MSLLLALLTLSLCAVLWLGSF), 51–71 (YILFIVYIGGILVLFIYVCMI), 88–108 (AWGAVMLMSLTMETDTFIILG), and 118–138 (IPMTILIFLSIYLLIVFFAVV).

It belongs to the complex I subunit 6 family.

The protein resides in the mitochondrion membrane. It catalyses the reaction a ubiquinone + NADH + 5 H(+)(in) = a ubiquinol + NAD(+) + 4 H(+)(out). Its function is as follows. Core subunit of the mitochondrial membrane respiratory chain NADH dehydrogenase (Complex I) that is believed to belong to the minimal assembly required for catalysis. Complex I functions in the transfer of electrons from NADH to the respiratory chain. The immediate electron acceptor for the enzyme is believed to be ubiquinone. The protein is NADH-ubiquinone oxidoreductase chain 6 (ND6) of Albinaria caerulea (Land snail).